A 385-amino-acid polypeptide reads, in one-letter code: 4-hydroxy-3-methylbut-2-en-1-yl diphosphate synthase (flavodoxin) (385 aa).

4 residues coordinate [4Fe-4S] cluster: C282, C285, C317, and E324.

The protein belongs to the IspG family. It depends on [4Fe-4S] cluster as a cofactor.

It carries out the reaction (2E)-4-hydroxy-3-methylbut-2-enyl diphosphate + oxidized [flavodoxin] + H2O + 2 H(+) = 2-C-methyl-D-erythritol 2,4-cyclic diphosphate + reduced [flavodoxin]. Its pathway is isoprenoid biosynthesis; isopentenyl diphosphate biosynthesis via DXP pathway; isopentenyl diphosphate from 1-deoxy-D-xylulose 5-phosphate: step 5/6. Converts 2C-methyl-D-erythritol 2,4-cyclodiphosphate (ME-2,4cPP) into 1-hydroxy-2-methyl-2-(E)-butenyl 4-diphosphate. The polypeptide is 4-hydroxy-3-methylbut-2-en-1-yl diphosphate synthase (flavodoxin) (Nocardia farcinica (strain IFM 10152)).